A 176-amino-acid polypeptide reads, in one-letter code: MSRIGYKVIKVPAGVTITKDGDNITVKGPKGELTRHFAPEIEMHQEGDEINFTRPDDSYKAVHGTMRANLNNMVVGVTEGYKKEMKLVGVGYRAQKQGEKLVLNVGYSHPVEMTAPKGVTVEVPSTTQIIISGISKQVVGQFAAVVRSVRAPEPYKGKGIRYVDEHVRRKEGKTGK.

It belongs to the universal ribosomal protein uL6 family. In terms of assembly, part of the 50S ribosomal subunit.

In terms of biological role, this protein binds to the 23S rRNA, and is important in its secondary structure. It is located near the subunit interface in the base of the L7/L12 stalk, and near the tRNA binding site of the peptidyltransferase center. The protein is Large ribosomal subunit protein uL6 of Lacticaseibacillus paracasei (strain ATCC 334 / BCRC 17002 / CCUG 31169 / CIP 107868 / KCTC 3260 / NRRL B-441) (Lactobacillus paracasei).